A 1045-amino-acid polypeptide reads, in one-letter code: MATPAGLERWVQDELHSVLGLSERHVAQFLIGTAQRCASAEEFVQRLRDTDTLDLSGPARDFALKLWNKVPRKAVAEKPARAAEREARALLEKNRSYRLLEDSEESSEEAVGRAGSSLQKKRKKRKHLRKKRQEEEEEEEEEEVPEKGKKTTGGNKPQTEKPESEDEWERTERERLQDLEERDAFAERVRQRDKDRTRNVLERSDKKAYEEAQKRLKMAEEDRKAMVPELRKKSRREYLAKREREKLEDLEAELADEEFLFGDVELSRHERRELKYKRRVRDLAREYRAAGEQEKLEATNRYHMPEETRGQPTRAVDLVEEESGAPGEEQRRWEEARLGAASLKFGARDAASQEPKYQLVLEEEETIEFVRATQLQGDEEPAAPPAPTQAQQKESIQAVRRSLPVFPFREELLAAVANHQILIIEGETGSGKTTQIPQYLFEEGYTQKGMKIACTQPRRVAAMSVAARVAREMGVKLGNEVGYSIRFEDCTSERTVLRYMTDGMLLREFLSEPDLASYSVVMVDEAHERTLHTDILFGLIKDVARFRPELKVLVASATLDTARFSTFFDDAPVFRIPGRRFPVDIFYTKAPEADYLEACVVSVLQIHVTQPPGDILVFLTGQEEIEAACEMLQDRCRRLGSKIRELLVLPIYANLPSDMQARIFQPTPPGARKVVVATNIAETSLTIEGIIYVLDPGFCKQKSYNPRTGMESLTVTPCSKASANQRAGRAGRVAAGKCFRLYTAWAYQHELEETTVPEIQRTSLGNVVLLLKSLGIHDLMHFDFLDPPPYETLLLALEQLYALGALNHLGELTTSGRKMAELPVDPMLSKMILASEKYSCSEEILTVAAMLSVNNSIFYRPKDKVVHADNARVNFFLPGGDHLVLLNVYTQWAESGYSSQWCYENFVQFRSMRRARDVREQLEGLLERVEVGLSSCQGDYIRVRKAITAGYFYHTARLTRSGYRTVKQQQTVFIHPNSSLFEEQPRWLLYHELVLTTKEFMRQVLEIESSWLLEVAPHYYKAKELEDPHAKKMPKKTGKTREELG.

The segment at 101–211 (EDSEESSEEA…ERSDKKAYEE (111 aa)) is disordered. Residues S103, S106, and S107 each carry the phosphoserine modification. A compositionally biased stretch (basic residues) spans 119–131 (QKKRKKRKHLRKK). The segment covering 135 to 144 (EEEEEEEEEV) has biased composition (acidic residues). The residue at position 164 (S164) is a Phosphoserine. Residues 170-211 (RTERERLQDLEERDAFAERVRQRDKDRTRNVLERSDKKAYEE) show a composition bias toward basic and acidic residues. The Helicase ATP-binding domain occupies 413 to 577 (LAAVANHQIL…FDDAPVFRIP (165 aa)). Residue 426-433 (GETGSGKT) participates in ATP binding. Positions 524–527 (DEAH) match the DEAH box motif. The Helicase C-terminal domain occupies 602 to 775 (SVLQIHVTQP…NVVLLLKSLG (174 aa)). The residue at position 716 (T716) is a Phosphothreonine. Residues 1026–1045 (EDPHAKKMPKKTGKTREELG) form a disordered region.

This sequence belongs to the DEAD box helicase family. DEAH subfamily. DDX16/PRP8 sub-subfamily. Component of pre-catalytic spliceosome complexes. Component of the minor spliceosome, which splices U12-type introns. Interacts with GPKOW. Interacts with TRIM6. Interacts with RIGI.

The protein resides in the nucleus. It localises to the nucleoplasm. The protein localises to the cytoplasm. The enzyme catalyses ATP + H2O = ADP + phosphate + H(+). Functionally, required for pre-mRNA splicing as a component of the spliceosome. Contributes to pre-mRNA splicing after spliceosome formation and prior to the first transesterification reaction. As a component of the minor spliceosome, involved in the splicing of U12-type introns in pre-mRNAs. Also plays a role in innate antiviral response by acting as a pattern recognition receptor sensing splicing signals in viral RNA. Mechanistically, TRIM6 promotes the interaction between unanchored 'Lys-48'-polyubiquitin chains and DHX16, leading to DHX16 interaction with RIGI and ssRNA to amplify RIGI-dependent innate antiviral immune responses. The chain is Pre-mRNA-splicing factor ATP-dependent RNA helicase DHX16 (DHX16) from Sus scrofa (Pig).